Here is a 610-residue protein sequence, read N- to C-terminus: UvrABC system protein C (610 aa).

The region spanning 16–94 (SQPGVYRMYD…IKLYQPRYNV (79 aa)) is the GIY-YIG domain. Positions 204–239 (QQVLTQLITRMEEASQQLHFEDAARIRDQIQAVRRV) constitute a UVR domain.

The protein belongs to the UvrC family. Interacts with UvrB in an incision complex.

The protein localises to the cytoplasm. Functionally, the UvrABC repair system catalyzes the recognition and processing of DNA lesions. UvrC both incises the 5' and 3' sides of the lesion. The N-terminal half is responsible for the 3' incision and the C-terminal half is responsible for the 5' incision. This Yersinia pseudotuberculosis serotype O:1b (strain IP 31758) protein is UvrABC system protein C.